The following is an 830-amino-acid chain: P-selectin (830 aa).

Positions 1-41 are cleaved as a signal peptide; the sequence is MANCQIAILYQRFQRVVFGISQLLCFSALISELTNQKEVAA. Over 42 to 771 the chain is Extracellular; that stretch reads WTYHYSTKAY…QAGPLTIQEA (730 aa). Residues Asn54 and Asn98 are each glycosylated (N-linked (GlcNAc...) asparagine). Positions 58 to 158 constitute a C-type lectin domain; that stretch reads KYCQNRYTDL…HCLKKKHALC (101 aa). 23 disulfide bridges follow: Cys60/Cys158, Cys131/Cys150, Cys163/Cys174, Cys168/Cys183, Cys185/Cys194, Cys200/Cys244, Cys230/Cys257, Cys262/Cys306, Cys292/Cys319, Cys324/Cys368, Cys354/Cys381, Cys386/Cys430, Cys416/Cys443, Cys448/Cys492, Cys478/Cys505, Cys510/Cys554, Cys540/Cys567, Cys572/Cys616, Cys602/Cys629, Cys642/Cys686, Cys672/Cys699, Cys704/Cys748, and Cys734/Cys761. Ca(2+) contacts are provided by Glu121, Asn123, and Asn124. Asn123 lines the a carbohydrate pocket. Residues Glu133 and Asn146 each coordinate a carbohydrate. Residues Asn146 and Asp147 each contribute to the Ca(2+) site. One can recognise an EGF-like domain in the interval 159-195; it reads YTASCQDMSCSKQGECLETIGNYTCSCYPGFYGPECE. Asn180 carries N-linked (GlcNAc...) asparagine glycosylation. Sushi domains follow at residues 198 to 259, 260 to 321, 322 to 383, 384 to 445, 446 to 507, 508 to 569, 570 to 631, 640 to 701, and 702 to 763; these read RECG…QCLA, AQCP…VCKA, VQCQ…TCEA, ISCE…VCQA, LQCQ…ECQA, IPCT…MCEA, IKCP…TCKG, VQCP…ACRA, and VKCS…TCQA. N-linked (GlcNAc...) asparagine glycans are attached at residues Asn212 and Asn219. Asn411 carries an N-linked (GlcNAc...) asparagine glycan. N-linked (GlcNAc...) asparagine glycosylation is present at Asn460. N-linked (GlcNAc...) asparagine glycosylation is present at Asn518. N-linked (GlcNAc...) asparagine glycosylation occurs at Asn665. N-linked (GlcNAc...) asparagine glycans are attached at residues Asn716, Asn723, and Asn741. Residues 772 to 795 traverse the membrane as a helical segment; it reads LTYFGGAVASTIGLIMGGTLLALL. At 796 to 830 the chain is on the cytoplasmic side; the sequence is RKRFRQKDDGKCPLNPHSHLGTYGVFTNAAFDPSP. Cys807 is lipidated: S-palmitoyl cysteine; alternate. The S-stearoyl cysteine; alternate moiety is linked to residue Cys807. Residues 818–821 carry the Endocytosis signal motif; that stretch reads YGVF. The interval 821–830 is interaction with SNX17; it reads FTNAAFDPSP.

This sequence belongs to the selectin/LECAM family. As to quaternary structure, interacts with SNX17. Interacts with SELPLG/PSGL1 and PODXL2 and mediates neutrophil adhesion and leukocyte rolling. This interaction requires the sialyl-Lewis X epitope of SELPLG and PODXL2, and specific tyrosine sulfation on SELPLG. Interacts (via C-type lectin domain) with alpha-IIb/beta3 integrin ITGA2B:ITGB3 and alpha-V/beta-3 integrin ITGAV:ITGB3. Interacts with alpha5/beta1 integrin ITGA5:ITGB1 and alpha4/beta1 integrin ITGA4:ITGB. As to expression, stored in the alpha-granules of platelets and Weibel-Palade bodies of endothelial cells. Upon cell activation by agonists, P-selectin is transported rapidly to the cell surface.

Its subcellular location is the cell membrane. Its function is as follows. Ca(2+)-dependent receptor for myeloid cells that binds to carbohydrates on neutrophils and monocytes. Mediates the interaction of activated endothelial cells or platelets with leukocytes. The ligand recognized is sialyl-Lewis X. Mediates rapid rolling of leukocyte rolling over vascular surfaces during the initial steps in inflammation through interaction with SELPLG. Mediates cell-cell interactions and cell adhesion via the interaction with integrin alpha-IIb/beta3 (ITGA2B:ITGB3) and integrin alpha-V/beta-3 (ITGAV:ITGB3). The protein is P-selectin (SELP) of Homo sapiens (Human).